A 326-amino-acid polypeptide reads, in one-letter code: Ribosomal large subunit pseudouridine synthase D (326 aa).

Residue D144 is part of the active site.

The protein belongs to the pseudouridine synthase RluA family.

The protein resides in the cytoplasm. The enzyme catalyses uridine(1911/1915/1917) in 23S rRNA = pseudouridine(1911/1915/1917) in 23S rRNA. Functionally, responsible for synthesis of pseudouridine from uracil at positions 1911, 1915 and 1917 in 23S ribosomal RNA. The protein is Ribosomal large subunit pseudouridine synthase D of Borreliella burgdorferi (strain ATCC 35210 / DSM 4680 / CIP 102532 / B31) (Borrelia burgdorferi).